The following is a 280-amino-acid chain: Gastrula zinc finger protein XlCGF46.1 (280 aa).

C2H2-type zinc fingers lie at residues 6-28 (FACK…KLMH), 34-56 (FECT…QLIH), 62-84 (FVCP…LLCH), 90-112 (FTCK…KLTH), 118-140 (FICS…QLIH), 146-168 (YVCT…LRTH), 174-196 (FKCE…KVTH), 202-224 (FTCE…QLTH), 230-252 (FKCE…QRFH), and 258-280 (YKCN…ELSH).

This sequence belongs to the krueppel C2H2-type zinc-finger protein family.

The protein localises to the nucleus. Functionally, may be involved in transcriptional regulation. This is Gastrula zinc finger protein XlCGF46.1 from Xenopus laevis (African clawed frog).